The primary structure comprises 1370 residues: DNA polymerase II large subunit (1370 aa).

Disordered stretches follow at residues isoleucine 279–alanine 317 and alanine 1041–serine 1081.

The protein belongs to the archaeal DNA polymerase II family. In terms of assembly, heterodimer of a large subunit and a small subunit. In terms of processing, this protein undergoes a protein self splicing that involves a post-translational excision of the intervening region (intein) followed by peptide ligation.

The enzyme catalyses DNA(n) + a 2'-deoxyribonucleoside 5'-triphosphate = DNA(n+1) + diphosphate. The catalysed reaction is Exonucleolytic cleavage in the 3'- to 5'-direction to yield nucleoside 5'-phosphates.. Possesses two activities: a DNA synthesis (polymerase) and an exonucleolytic activity that degrades single-stranded DNA in the 3'- to 5'-direction. Has a template-primer preference which is characteristic of a replicative DNA polymerase. This Halobacterium salinarum (strain ATCC 700922 / JCM 11081 / NRC-1) (Halobacterium halobium) protein is DNA polymerase II large subunit (polC).